We begin with the raw amino-acid sequence, 205 residues long: MSNIVWHQHSVDQAARAKLKGQNPVLLWFTGLSGAGKSTLAGALERALFEAGFHTYLLDGDNVRHGLCKDLGFSVADRDENLRRVGEVAKLMVDAGLVVLSAFISPTREERDSIRARFPEGQFIEVHVSTPLSICEQRDPKGLYVKARRGEISNFTGISSPYEAPLSAELTIDTSKGDLASQVRALIDYLTAIGVINPDKAKALA.

An ATP-binding site is contributed by glycine 31–serine 38. The active-site Phosphoserine intermediate is the serine 105.

Belongs to the APS kinase family.

It carries out the reaction adenosine 5'-phosphosulfate + ATP = 3'-phosphoadenylyl sulfate + ADP + H(+). The protein operates within sulfur metabolism; hydrogen sulfide biosynthesis; sulfite from sulfate: step 2/3. Catalyzes the synthesis of activated sulfate. In Shewanella sp. (strain ANA-3), this protein is Adenylyl-sulfate kinase.